A 162-amino-acid chain; its full sequence is Shikimate kinase (162 aa).

ATP is bound at residue Gly-11–Ser-16. Ser-15 serves as a coordination point for Mg(2+). Substrate contacts are provided by Asp-33, Arg-57, and Gly-80. Arg-116 contacts ATP. Arg-132 lines the substrate pocket.

Belongs to the shikimate kinase family. As to quaternary structure, monomer. Mg(2+) is required as a cofactor.

The protein resides in the cytoplasm. It carries out the reaction shikimate + ATP = 3-phosphoshikimate + ADP + H(+). It participates in metabolic intermediate biosynthesis; chorismate biosynthesis; chorismate from D-erythrose 4-phosphate and phosphoenolpyruvate: step 5/7. Its function is as follows. Catalyzes the specific phosphorylation of the 3-hydroxyl group of shikimic acid using ATP as a cosubstrate. The polypeptide is Shikimate kinase (Helicobacter pylori (strain HPAG1)).